The primary structure comprises 86 residues: RNA-binding protein Hfq (86 aa).

The 60-residue stretch at 9–68 folds into the Sm domain; it reads DPYLNTLRKERVPVSIYLVNGIKLQGQIESFDQFVILLKNTVSQMVYKHAISTVVPSRPV. The interval 66-86 is disordered; the sequence is RPVRLPSAGDSEQADAEPGNA.

Belongs to the Hfq family. Homohexamer.

In terms of biological role, RNA chaperone that binds small regulatory RNA (sRNAs) and mRNAs to facilitate mRNA translational regulation in response to envelope stress, environmental stress and changes in metabolite concentrations. Also binds with high specificity to tRNAs. The protein is RNA-binding protein Hfq of Ectopseudomonas mendocina (strain ymp) (Pseudomonas mendocina).